A 519-amino-acid polypeptide reads, in one-letter code: Cytochrome P450 52A12 (519 aa).

A heme-binding site is contributed by cysteine 467.

It belongs to the cytochrome P450 family. Requires heme as cofactor.

Its subcellular location is the membrane. Together with an NADPH cytochrome P450 the enzyme system catalyzes the terminal hydroxylation as the first step in the assimilation of alkanes and fatty acids. The protein is Cytochrome P450 52A12 (CYP52A12) of Debaryomyces hansenii (Yeast).